The primary structure comprises 328 residues: D-cysteine desulfhydrase (328 aa).

Lys-51 is modified (N6-(pyridoxal phosphate)lysine).

It belongs to the ACC deaminase/D-cysteine desulfhydrase family. In terms of assembly, homodimer. The cofactor is pyridoxal 5'-phosphate.

The enzyme catalyses D-cysteine + H2O = hydrogen sulfide + pyruvate + NH4(+) + H(+). Catalyzes the alpha,beta-elimination reaction of D-cysteine and of several D-cysteine derivatives. It could be a defense mechanism against D-cysteine. The protein is D-cysteine desulfhydrase of Shigella flexneri serotype 5b (strain 8401).